A 164-amino-acid polypeptide reads, in one-letter code: Crossover junction endodeoxyribonuclease RuvC (164 aa).

Residues D7, E67, and D140 contribute to the active site. Residues D7, E67, and D140 each contribute to the Mg(2+) site.

This sequence belongs to the RuvC family. As to quaternary structure, homodimer which binds Holliday junction (HJ) DNA. The HJ becomes 2-fold symmetrical on binding to RuvC with unstacked arms; it has a different conformation from HJ DNA in complex with RuvA. In the full resolvosome a probable DNA-RuvA(4)-RuvB(12)-RuvC(2) complex forms which resolves the HJ. Mg(2+) serves as cofactor.

The protein resides in the cytoplasm. It catalyses the reaction Endonucleolytic cleavage at a junction such as a reciprocal single-stranded crossover between two homologous DNA duplexes (Holliday junction).. The RuvA-RuvB-RuvC complex processes Holliday junction (HJ) DNA during genetic recombination and DNA repair. Endonuclease that resolves HJ intermediates. Cleaves cruciform DNA by making single-stranded nicks across the HJ at symmetrical positions within the homologous arms, yielding a 5'-phosphate and a 3'-hydroxyl group; requires a central core of homology in the junction. The consensus cleavage sequence is 5'-(A/T)TT(C/G)-3'. Cleavage occurs on the 3'-side of the TT dinucleotide at the point of strand exchange. HJ branch migration catalyzed by RuvA-RuvB allows RuvC to scan DNA until it finds its consensus sequence, where it cleaves and resolves the cruciform DNA. The polypeptide is Crossover junction endodeoxyribonuclease RuvC (Pelotomaculum thermopropionicum (strain DSM 13744 / JCM 10971 / SI)).